We begin with the raw amino-acid sequence, 134 residues long: Ribosome-binding factor A (134 aa).

This sequence belongs to the RbfA family. In terms of assembly, monomer. Binds 30S ribosomal subunits, but not 50S ribosomal subunits or 70S ribosomes.

Its subcellular location is the cytoplasm. One of several proteins that assist in the late maturation steps of the functional core of the 30S ribosomal subunit. Associates with free 30S ribosomal subunits (but not with 30S subunits that are part of 70S ribosomes or polysomes). Required for efficient processing of 16S rRNA. May interact with the 5'-terminal helix region of 16S rRNA. The chain is Ribosome-binding factor A from Synechococcus sp. (strain CC9311).